Consider the following 1029-residue polypeptide: Toll-like receptor 9 (1029 aa).

The signal sequence occupies residues 1-24 (MGPYCAPHPLSLLVQAAALAAALA). The Extracellular segment spans residues 25 to 815 (EGTLPAFLPC…LCLDETLSLD (791 aa)). An intrachain disulfide couples Cys34 to Cys44. DNA is bound at residue 46–50 (WLFLK). LRR repeat units lie at residues 61–84 (RANV…DFVH), 86–109 (SNLR…HFPC), 121–146 (VPTL…SLVS), 149–165 (LSHT…FTGL), 166–189 (HALR…ALEV), 197–220 (LGNL…LPPS), 222–241 (DTLL…DLAN), 242–267 (LTAL…CREC), 282–305 (LSRL…WFRG), 307–331 (GRLQ…IFND), 332–355 (LTQL…HLHL), 362–385 (LVSL…TLQS), 389–412 (LPKL…IFGA), 414–439 (PSLL…LGEV), 469–492 (CNLN…MFTR), 494–517 (SRLQ…QFVP), 518–541 (LTSL…SFTE), 543–570 (PQLE…SFVA), 572–596 (LPSL…LSSA), 598–620 (LRAL…LYLC), 625–648 (LRNL…HLDN), 650–673 (PKSL…SLTV), 674–697 (LPRL…SLPP), 699–721 (IRLQ…FFVR), 722–745 (ATRL…WFGS), and 747–770 (AGTL…AFVD). The N-linked (GlcNAc...) asparagine glycan is linked to Asn63. DNA is bound by residues 71–76 (SNRIHH) and 94–108 (KWNC…MHFP). Cys97 and Cys109 are joined by a disulfide. N-linked (GlcNAc...) asparagine glycosylation is present at Asn128. Residue Tyr131 participates in DNA binding. A disulfide bond links Cys177 and Cys183. DNA is bound at residue 178–180 (YYM). Residue Asn199 is glycosylated (N-linked (GlcNAc...) asparagine). Tyr207 serves as a coordination point for DNA. N-linked (GlcNAc...) asparagine glycans are attached at residues Asn209 and Asn241. Disulfide bonds link Cys254/Cys267 and Cys257/Cys264. The S-palmitoyl cysteine moiety is linked to residue Cys257. Arg261 contributes to the DNA binding site. Cys264 is lipidated: S-palmitoyl cysteine. N-linked (GlcNAc...) asparagine glycosylation is found at Asn339 and Asn380. Residues Cys469 and Cys498 are joined by a disulfide bond. Residues Asn472 and Asn511 are each glycosylated (N-linked (GlcNAc...) asparagine). The N-linked (GlcNAc...) asparagine glycan is linked to Asn565. N-linked (GlcNAc...) asparagine glycosylation is found at Asn667 and Asn692. Asn729 is a glycosylation site (N-linked (GlcNAc...) asparagine). Disulfide bonds link Cys762/Cys788 and Cys764/Cys807. A helical transmembrane segment spans residues 816–836 (CFGLSLLMVALGLAVPMLHHL). Residues 837 to 1029 (CGWDLWYCFH…NFCRGPTTAE (193 aa)) are Cytoplasmic-facing. The TIR domain maps to 864 to 1009 (LLYDAVVVFD…SFWANLGIAL (146 aa)).

The protein belongs to the Toll-like receptor family. Monomer and homodimer. Exists as a monomer in the absence of unmethylated cytidine-phosphate-guanosine (CpG) ligand. Proteolytic processing of an insertion loop (Z-loop) is required for homodimerization upon binding to the unmethylated CpG ligand leading to its activation. Interacts with MYD88 via their respective TIR domains. Interacts with BTK. Interacts (via transmembrane domain) with UNC93B1. Interacts with CD300LH; the interaction may promote full activation of TLR9-triggered innate responses. Interacts with CNPY3 and HSP90B1; this interaction is required for proper folding in the endoplasmic reticulum. Interacts with SMPDL3B. Interacts with CD82; this interaction is essential for TLR9-dependent myddosome formation in response to CpG stimulation. Post-translationally, activated by proteolytic cleavage of the flexible loop between repeats LRR14 and LRR15 within the ectodomain. Cleavage requires UNC93B1. Proteolytically processed by first removing the majority of the ectodomain by either asparagine endopeptidase (AEP) or a cathepsin followed by a trimming event that is solely cathepsin mediated and required for optimal receptor signaling. Palmitoylated by ZDHHC3 in the Golgi regulates TLR9 trafficking from the Golgi to endosomes. Depalmitoylation by PPT1 controls the release of TLR9 from UNC93B1 in endosomes.

It is found in the endoplasmic reticulum membrane. The protein localises to the endosome. It localises to the lysosome. The protein resides in the cytoplasmic vesicle. Its subcellular location is the phagosome. Its function is as follows. Key component of innate and adaptive immunity. TLRs (Toll-like receptors) control host immune response against pathogens through recognition of molecular patterns specific to microorganisms. TLR9 is a nucleotide-sensing TLR which is activated by unmethylated cytidine-phosphate-guanosine (CpG) dinucleotides. Acts via MYD88 and TRAF6, leading to NF-kappa-B activation, cytokine secretion and the inflammatory response. Upon CpG stimulation, induces B-cell proliferation, activation, survival and antibody production. This chain is Toll-like receptor 9 (TLR9), found in Bos taurus (Bovine).